The following is a 1064-amino-acid chain: Fibropellin-1 (1064 aa).

The first 19 residues, 1–19, serve as a signal peptide directing secretion; that stretch reads MRTWLLAVLLLSVIAVTYG. The EGF-like 1 domain maps to 20-55; that stretch reads QGECDSDPCENGSTCQEGEGSYICQCPMGYDGQNCD. 4 disulfides stabilise this stretch: cysteine 23–cysteine 34, cysteine 28–cysteine 43, cysteine 45–cysteine 54, and cysteine 62–cysteine 88. An N-linked (GlcNAc...) asparagine glycan is attached at asparagine 30. Residues 62 to 175 enclose the CUB domain; that stretch reads CGYNVFDANG…NRGFRITFSS (114 aa). Asparagine 136 is a glycosylation site (N-linked (GlcNAc...) asparagine). The region spanning 176–212 is the EGF-like 2; calcium-binding domain; that stretch reads DGDDCDPNLCQNGAACTDLVNDYACTCPPGFTGRNCE. Intrachain disulfides connect cysteine 180–cysteine 191, cysteine 185–cysteine 200, cysteine 202–cysteine 211, cysteine 218–cysteine 229, cysteine 223–cysteine 238, cysteine 240–cysteine 249, cysteine 256–cysteine 267, cysteine 261–cysteine 276, cysteine 278–cysteine 287, cysteine 294–cysteine 305, cysteine 299–cysteine 314, cysteine 316–cysteine 325, cysteine 332–cysteine 343, cysteine 337–cysteine 352, cysteine 354–cysteine 363, cysteine 370–cysteine 381, cysteine 375–cysteine 390, cysteine 392–cysteine 401, cysteine 408–cysteine 419, cysteine 413–cysteine 428, cysteine 430–cysteine 439, cysteine 446–cysteine 457, cysteine 451–cysteine 466, cysteine 468–cysteine 477, cysteine 484–cysteine 495, cysteine 489–cysteine 504, cysteine 506–cysteine 515, cysteine 522–cysteine 533, cysteine 527–cysteine 542, cysteine 544–cysteine 553, cysteine 560–cysteine 571, cysteine 565–cysteine 580, cysteine 582–cysteine 591, cysteine 598–cysteine 609, cysteine 603–cysteine 618, cysteine 620–cysteine 629, cysteine 636–cysteine 647, cysteine 641–cysteine 656, cysteine 658–cysteine 667, cysteine 674–cysteine 685, cysteine 679–cysteine 694, cysteine 696–cysteine 705, cysteine 712–cysteine 723, cysteine 717–cysteine 732, cysteine 734–cysteine 743, cysteine 750–cysteine 761, cysteine 755–cysteine 770, cysteine 772–cysteine 781, cysteine 788–cysteine 799, cysteine 793–cysteine 808, cysteine 810–cysteine 819, cysteine 826–cysteine 837, cysteine 831–cysteine 846, cysteine 848–cysteine 857, cysteine 864–cysteine 875, cysteine 869–cysteine 884, cysteine 886–cysteine 895, cysteine 902–cysteine 913, cysteine 907–cysteine 922, cysteine 924–cysteine 933, and cysteine 939–cysteine 1015. The EGF-like 3; calcium-binding domain occupies 214–250; sequence DIDECASDPCQNGGACVDGVNGYVCNCVPGFDGDECE. Positions 252-288 constitute an EGF-like 4; calcium-binding domain; that stretch reads NINECASSPCLNGGICVDGVNMFECTCLAGFTGVRCE. The region spanning 290 to 326 is the EGF-like 5; calcium-binding domain; it reads NIDECASAPCQNGGICIDGINGYTCSCPLGFSGDNCE. The EGF-like 6; calcium-binding domain occupies 328-364; the sequence is NDDECSSIPCLNGGTCVDLVNAYMCVCAPGWTGPTCA. In terms of domain architecture, EGF-like 7; calcium-binding spans 366-402; that stretch reads NIDECASAPCQNGGVCIDGVNGYMCDCQPGYTGTHCE. Residues 404–440 form the EGF-like 8; calcium-binding domain; the sequence is DIDECARPPCQNGGDCVDGVNGYVCICAPGFDGLNCE. In terms of domain architecture, EGF-like 9; calcium-binding spans 442 to 478; the sequence is NIDECASRPCQNGAVCVDGVNGFVCTCSAGYTGVLCE. One can recognise an EGF-like 10; calcium-binding domain in the interval 480–516; sequence DINECASMPCLNGGVCTDLVNGYICTCAAGFEGTNCE. The EGF-like 11; calcium-binding domain maps to 518-554; it reads DTDECASFPCQNGATCTDQVNGYVCTCVPGYTGVLCE. The EGF-like 12; calcium-binding domain maps to 556–592; sequence DINECASFPCLNGGTCNDQVNGYVCVCAQDTSVSTCE. Positions 594 to 630 constitute an EGF-like 13; calcium-binding domain; sequence DRDECASAPCLNGGACMDVVNGFVCTCLPGWEGTNCE. Positions 632-668 constitute an EGF-like 14; calcium-binding domain; sequence NTDECASSPCMNGGLCVDQVNSYVCFCLPGFTGIHCG. Residues 670–706 form the EGF-like 15; calcium-binding domain; the sequence is EIDECASSPCLNGGQCIDRVDSYECVCAAGYTAVRCQ. The EGF-like 16; calcium-binding domain occupies 708–744; that stretch reads NIDECASAPCQNGGVCVDGVNGYVCNCAPGYTGDNCE. The 37-residue stretch at 746–782 folds into the EGF-like 17; calcium-binding domain; sequence EIDECASMPCLNGGACIEMVNGYTCQCVAGYTGVICE. The region spanning 784-820 is the EGF-like 18; calcium-binding domain; sequence DIDECASAPCQNGGVCTDTINGYICACVPGFTGSNCE. Residues 822–858 form the EGF-like 19; calcium-binding domain; it reads NIDECASDPCLNGGICVDGVNGFVCQCPPNYSGTYCE. Asparagine 851 carries an N-linked (GlcNAc...) asparagine glycan. The region spanning 860-896 is the EGF-like 20 domain; that stretch reads SLDACRSMPCQNGATCVNVGADYVCECVPGYAGQNCE. The EGF-like 21; calcium-binding domain maps to 898-934; sequence DINECASLPCQNGGLCIDGIAGYTCQCRLGYIGVNCE. The 120-residue stretch at 937-1056 folds into the Avidin-like domain; sequence GFCDLEGMWY…GQDKWTRYEQ (120 aa).

In terms of assembly, homotetramer.

It localises to the secreted. The protein resides in the extracellular space. The protein localises to the cytoplasmic vesicle. Its subcellular location is the extracellular matrix. It is found in the hyaline layer. It localises to the apical lamina. In terms of biological role, forms the apical lamina, a component of the extracellular matrix. This chain is Fibropellin-1 (EGF1), found in Strongylocentrotus purpuratus (Purple sea urchin).